The primary structure comprises 414 residues: MSGLDGGNKLPLAQTGGLAAPDHASGDPDRDQCQGLREETEATQVMANTGGGSLETVAEGGASQDPVDCGPALRVPVAGSRGGAATKAGQEDAPPSTKGLEAASAAEAADSSQKNGCQLGEPRGPAGQKALEACGAGGLGSQMIPGKKAKEVTTKKRAISAAVEKEGEAGAAMEEKKVVQKEKKVAGGVKEETRPRAPKINNCMDSLEAIDQELSNVNAQADRAFLQLERKFGRMRRLHMQRRSFIIQNIPGFWVTAFRNHPQLSPMISGQDEDMLRYMINLEVEELKHPRAGCKFKFIFQGNPYFRNEGLVKEYERRSSGRVVSLSTPIRWHRGQDPQAHIHRNREGNTIPSFFNWFSDHSLLEFDRIAEIIKGELWPNPLQYYLMGEGPRRGIRGPPRQPVESARSFRFQSG.

Disordered stretches follow at residues 1–129 (MSGL…AGQK) and 391–414 (PRRGIRGPPRQPVESARSFRFQSG). The span at 24-40 (ASGDPDRDQCQGLREET) shows a compositional bias: basic and acidic residues. Residues 101 to 112 (EAASAAEAADSS) are compositionally biased toward low complexity.

It belongs to the nucleosome assembly protein (NAP) family.

The protein is Testis-specific Y-encoded-like protein 4 (TSPYL4) of Homo sapiens (Human).